The chain runs to 112 residues: Probable small nuclear ribonucleoprotein Sm D2 (112 aa).

The segment covering 1–15 has biased composition (basic and acidic residues); the sequence is MSRMNDETMEDKPDD. Residues 1–23 form a disordered region; it reads MSRMNDETMEDKPDDSNGPLSIL. A Sm domain is found at 20-106; sequence LSILMDSVNN…VILVLKNPLG (87 aa).

The protein belongs to the snRNP core protein family.

The protein resides in the nucleus. It localises to the cytoplasm. Its subcellular location is the cytosol. Its function is as follows. Plays a role in pre-mRNA splicing as a core component of the spliceosomal U1, U2, U4 and U5 small nuclear ribonucleoproteins (snRNPs), the building blocks of the spliceosome. The protein is Probable small nuclear ribonucleoprotein Sm D2 (snrpd2) of Dictyostelium discoideum (Social amoeba).